A 214-amino-acid chain; its full sequence is uncharacterized protein (214 aa).

7 helical membrane passes run 4 to 23 (VSIV…FSSF), 35 to 57 (SFVH…LGYY), 67 to 89 (QWMR…FLFT), 96 to 118 (VSLV…VHVY), 128 to 150 (ARVM…VSFS), 155 to 177 (LPLL…SATV), and 187 to 209 (TVVY…FFAV).

The protein resides in the cell membrane. This is an uncharacterized protein from Treponema pallidum (strain Nichols).